The sequence spans 71 residues: Small ribosomal subunit protein bS21 (71 aa).

Residues 37-71 (HYEKPTAERKRKKAAAVKRHMKKLSRDNARRVKLY) are disordered. Over residues 45-59 (RKRKKAAAVKRHMKK) the composition is skewed to basic residues. A compositionally biased stretch (basic and acidic residues) spans 60-71 (LSRDNARRVKLY).

This sequence belongs to the bacterial ribosomal protein bS21 family.

The polypeptide is Small ribosomal subunit protein bS21 (Pseudoalteromonas translucida (strain TAC 125)).